Here is a 542-residue protein sequence, read N- to C-terminus: Calcium-dependent protein kinase 7 (542 aa).

A lipid anchor (N-myristoyl glycine) is attached at Gly-2. One can recognise a Protein kinase domain in the interval 79–337 (YIIGRKLGQG…AHEVLRHPWI (259 aa)). ATP contacts are provided by residues 85–93 (LGQGQFGTT) and Lys-108. The active-site Proton acceptor is Asp-203. The interval 343 to 373 (ATDQALDPSVISRLKQFSAMNKLKKLALRVI) is autoinhibitory domain. The EF-hand 1 domain occupies 380 to 415 (EEIAGLREMFKAVDTKNRGVITFGELREGLRRFGAE). Ca(2+)-binding residues include Asp-393, Glu-404, Asp-431, Asn-433, Thr-435, Glu-440, Asp-465, Asp-467, Ser-469, Tyr-471, Lys-476, Asp-499, Asn-501, Asp-503, Gln-505, and Glu-510. Residues 416–451 (FKDTEIGDIMEAAHNDNNVTIHYEEFIAATLPLNKI) form the EF-hand 2; degenerate domain. EF-hand domains follow at residues 452 to 487 (EREEHLLAAFTYFDKDGSGYITVDKLQRACGEHNME) and 488 to 521 (DSLLEEIISEVDQNNDGQIDYAEFVAMMQGSNVG).

It belongs to the protein kinase superfamily. Ser/Thr protein kinase family. CDPK subfamily. As to expression, expressed in roots. Expressed in leaf sheaths.

Its subcellular location is the membrane. It is found in the cytoplasm. The protein localises to the cytosol. The enzyme catalyses L-seryl-[protein] + ATP = O-phospho-L-seryl-[protein] + ADP + H(+). The catalysed reaction is L-threonyl-[protein] + ATP = O-phospho-L-threonyl-[protein] + ADP + H(+). Activated by calcium. Autophosphorylation may play an important role in the regulation of the kinase activity. Its function is as follows. May play a role in signal transduction pathways that involve calcium as a second messenger. May be a signaling component in the response to gibberellin and cold stress. This chain is Calcium-dependent protein kinase 7, found in Oryza sativa subsp. japonica (Rice).